A 449-amino-acid chain; its full sequence is Bifunctional protein GlmU (449 aa).

Positions 1–226 (MNNIHAIILA…KFEVLGVNDK (226 aa)) are pyrophosphorylase. Residues 9 to 12 (LAAG), Lys23, Gln73, 78 to 79 (GT), 100 to 102 (YGD), Gly137, Glu151, Asn166, and Asn224 each bind UDP-N-acetyl-alpha-D-glucosamine. Asp102 provides a ligand contact to Mg(2+). Mg(2+) is bound at residue Asn224. The interval 227-247 (VQLAELERLFQKDQAIQFMKQ) is linker. The segment at 248 to 449 (GLGLKDPTRF…QKNLKYRSKK (202 aa)) is N-acetyltransferase. Positions 330 and 348 each coordinate UDP-N-acetyl-alpha-D-glucosamine. The active-site Proton acceptor is His360. UDP-N-acetyl-alpha-D-glucosamine-binding residues include Tyr363 and Asn374. Acetyl-CoA contacts are provided by residues Ala377, 383–384 (NY), Ser402, Ala420, and Arg437.

This sequence in the N-terminal section; belongs to the N-acetylglucosamine-1-phosphate uridyltransferase family. It in the C-terminal section; belongs to the transferase hexapeptide repeat family. As to quaternary structure, homotrimer. The cofactor is Mg(2+).

Its subcellular location is the cytoplasm. The catalysed reaction is alpha-D-glucosamine 1-phosphate + acetyl-CoA = N-acetyl-alpha-D-glucosamine 1-phosphate + CoA + H(+). It catalyses the reaction N-acetyl-alpha-D-glucosamine 1-phosphate + UTP + H(+) = UDP-N-acetyl-alpha-D-glucosamine + diphosphate. It functions in the pathway nucleotide-sugar biosynthesis; UDP-N-acetyl-alpha-D-glucosamine biosynthesis; N-acetyl-alpha-D-glucosamine 1-phosphate from alpha-D-glucosamine 6-phosphate (route II): step 2/2. The protein operates within nucleotide-sugar biosynthesis; UDP-N-acetyl-alpha-D-glucosamine biosynthesis; UDP-N-acetyl-alpha-D-glucosamine from N-acetyl-alpha-D-glucosamine 1-phosphate: step 1/1. Its pathway is bacterial outer membrane biogenesis; LPS lipid A biosynthesis. Catalyzes the last two sequential reactions in the de novo biosynthetic pathway for UDP-N-acetylglucosamine (UDP-GlcNAc). The C-terminal domain catalyzes the transfer of acetyl group from acetyl coenzyme A to glucosamine-1-phosphate (GlcN-1-P) to produce N-acetylglucosamine-1-phosphate (GlcNAc-1-P), which is converted into UDP-GlcNAc by the transfer of uridine 5-monophosphate (from uridine 5-triphosphate), a reaction catalyzed by the N-terminal domain. This chain is Bifunctional protein GlmU, found in Vesicomyosocius okutanii subsp. Calyptogena okutanii (strain HA).